Reading from the N-terminus, the 219-residue chain is uncharacterized protein (219 aa).

It belongs to the CIA30 family.

The protein localises to the cytoplasm. Its subcellular location is the nucleus. This is an uncharacterized protein from Schizosaccharomyces pombe (strain 972 / ATCC 24843) (Fission yeast).